Reading from the N-terminus, the 407-residue chain is Argininosuccinate synthase (407 aa).

Residues 10 to 18 (AYSGGLDTS) and alanine 37 each bind ATP. Tyrosine 88 and serine 93 together coordinate L-citrulline. Glycine 118 provides a ligand contact to ATP. Threonine 120, asparagine 124, and aspartate 125 together coordinate L-aspartate. Asparagine 124 lines the L-citrulline pocket. The L-citrulline site is built by arginine 128, serine 179, serine 188, glutamate 264, and tyrosine 276.

It belongs to the argininosuccinate synthase family. Type 1 subfamily. Homotetramer.

It localises to the cytoplasm. It catalyses the reaction L-citrulline + L-aspartate + ATP = 2-(N(omega)-L-arginino)succinate + AMP + diphosphate + H(+). Its pathway is amino-acid biosynthesis; L-arginine biosynthesis; L-arginine from L-ornithine and carbamoyl phosphate: step 2/3. This chain is Argininosuccinate synthase, found in Jannaschia sp. (strain CCS1).